Consider the following 437-residue polypeptide: Zinc finger protein 491 (437 aa).

A C2H2-type 1; degenerate zinc finger spans residues 35–59 (KSCESGTCGEIFMGYSSFNRNIRTD). Residues 103–125 (FDCKECEKSFISPASIRRYMVTH) form a C2H2-type 2; degenerate zinc finger. C2H2-type zinc fingers lie at residues 131 to 153 (YKCKFCGKALDCLSLYLTHERTH), 159 to 181 (YECKQCGKAFSWHSSVRIHERTH), 187 to 209 (YECKECGKSFNFSSSFRRHERTH), 215 to 237 (YKCKECGKAFNCPSSFHRHERTH), 243 to 265 (YECKLYGKALSRLISFRRHMRMH), 271 to 293 (HKCKICGKAFYSPSSFQRHERSH), 299 to 321 (YKCKQCGKAFTCSTSFQYHERTH), 327 to 349 (DGCKQCGKAFRSAKYIRIHGRTH), 355 to 377 (YECKQCGKAFHCVSSFHRHERTH), 383 to 405 (YECKHCGKAFTCSIYIRIHERIH), and 411 to 433 (YQCKECGKAFIRSSYCRKHERTH).

It belongs to the krueppel C2H2-type zinc-finger protein family.

It localises to the nucleus. Its function is as follows. May be involved in transcriptional regulation. The chain is Zinc finger protein 491 (ZNF491) from Homo sapiens (Human).